Reading from the N-terminus, the 847-residue chain is A-kinase anchor protein 4 (847 aa).

A propeptide spanning residues 1 to 187 (MIAYCGTTKM…MAASKNTNNN (187 aa)) is cleaved from the precursor. Phosphoserine occurs at positions 95, 129, 189, and 203. Polar residues predominate over residues 182 to 204 (KNTNNNQSPSNPATKSPSNQRSV). Positions 182–209 (KNTNNNQSPSNPATKSPSNQRSVATPDG) are disordered. Position 206 is a phosphothreonine (Thr206). Ser212, Ser225, and Ser270 each carry phosphoserine. Residues 218 to 231 (YYVNRLSSLVIQMA) are interaction with Prkar1a and Prkar2a. Tyr300 carries the phosphotyrosine modification. Phosphoserine occurs at positions 301, 304, 340, 430, 441, 443, 462, 491, 496, and 503. Residues 334–343 (YANQVASDMM) form a PKA-RI subunit binding domain region. Thr505 carries the post-translational modification Phosphothreonine. A disordered region spans residues 511–536 (KQGTQGRVPNKVCPSKDEKREKISPS). Over residues 524-533 (PSKDEKREKI) the composition is skewed to basic and acidic residues. Phosphoserine occurs at positions 536 and 581. The tract at residues 583–613 (QYEKSGGGQSSKSLSMKHFESRGAPGPSTCA) is disordered. Ser626, Ser631, Ser648, Ser650, Ser674, Ser677, Ser700, and Ser729 each carry phosphoserine. The disordered stretch occupies residues 655 to 677 (CCDSRSKQAAPVAKRPEDQSQDS).

The protein belongs to the AKAP110 family. In terms of assembly, interacts with PRKAR1A and PRKAR2A. Interacts with ENO4. Interacts with QRICH2. Post-translationally, phosphorylated by STK33 during sperm flagella assembly. In terms of tissue distribution, expressed in flagella of epididymal sperm.

It is found in the cell projection. Its subcellular location is the cilium. The protein localises to the flagellum. Functionally, major structural component of sperm fibrous sheath. May play a role in sperm motility. The polypeptide is A-kinase anchor protein 4 (Rattus norvegicus (Rat)).